Here is a 458-residue protein sequence, read N- to C-terminus: Probable mitochondrial chaperone BCS1-B (458 aa).

Over 1-26 (MENVITNNNKGLPKSILKFIPEPIQP) the chain is Mitochondrial intermembrane. A helical transmembrane segment spans residues 27–47 (LFENPFFSAGFGLIGVGSILA). Residues 48–458 (MGRKGFQQAM…INNLNELIKK (411 aa)) lie on the Mitochondrial matrix side of the membrane. 248–255 (GPPGTGKS) contacts ATP.

Belongs to the AAA ATPase family. BCS1 subfamily.

The protein localises to the mitochondrion inner membrane. The catalysed reaction is ATP + H2O = ADP + phosphate + H(+). Functionally, chaperone necessary for the assembly of mitochondrial respiratory chain complex III. This Dictyostelium discoideum (Social amoeba) protein is Probable mitochondrial chaperone BCS1-B (bcsl1b).